The sequence spans 117 residues: UPF0102 protein Clos_1471 (117 aa).

Belongs to the UPF0102 family.

This chain is UPF0102 protein Clos_1471, found in Alkaliphilus oremlandii (strain OhILAs) (Clostridium oremlandii (strain OhILAs)).